The primary structure comprises 451 residues: Phosphoglucosamine mutase (451 aa).

The active-site Phosphoserine intermediate is Ser-102. Mg(2+) is bound by residues Ser-102, Asp-243, Asp-245, and Asp-247. Ser-102 is modified (phosphoserine).

The protein belongs to the phosphohexose mutase family. It depends on Mg(2+) as a cofactor. Post-translationally, activated by phosphorylation.

It carries out the reaction alpha-D-glucosamine 1-phosphate = D-glucosamine 6-phosphate. Its function is as follows. Catalyzes the conversion of glucosamine-6-phosphate to glucosamine-1-phosphate. This chain is Phosphoglucosamine mutase, found in Brucella canis (strain ATCC 23365 / NCTC 10854 / RM-666).